We begin with the raw amino-acid sequence, 689 residues long: Glycine--tRNA ligase beta subunit (689 aa).

The protein belongs to the class-II aminoacyl-tRNA synthetase family. Tetramer of two alpha and two beta subunits.

It localises to the cytoplasm. It carries out the reaction tRNA(Gly) + glycine + ATP = glycyl-tRNA(Gly) + AMP + diphosphate. The protein is Glycine--tRNA ligase beta subunit of Acinetobacter baylyi (strain ATCC 33305 / BD413 / ADP1).